Reading from the N-terminus, the 773-residue chain is Serine/threonine-protein kinase CBK1 (773 aa).

Composition is skewed to polar residues over residues 50–59 (LHDQYSSHME) and 178–217 (GNYNINGSQSSSPYHQPQTFYTNSNLSSGQLSAHRSSPQR). Disordered stretches follow at residues 50-111 (LHDQ…GGNI) and 177-275 (NGNY…QQQQ). Low complexity-rich tracts occupy residues 218 to 256 (QPAQPLQQTTFTQLPQPSLPPQQQQQQQQQQQQQQQQQP) and 265 to 275 (QQTQLQQQQQQ). The region spanning 370-686 (FHTVQVIGKG…ADEIKSHPFF (317 aa)) is the Protein kinase domain. Residues 376 to 384 (IGKGAFGEV) and lysine 399 contribute to the ATP site. Aspartate 493 acts as the Proton acceptor in catalysis. Residues 687–771 (RGVDWNTIRQ…SRFDYLTRKN (85 aa)) enclose the AGC-kinase C-terminal domain.

It belongs to the protein kinase superfamily. STE Ser/Thr protein kinase family. COT1 subfamily.

The catalysed reaction is L-seryl-[protein] + ATP = O-phospho-L-seryl-[protein] + ADP + H(+). The enzyme catalyses L-threonyl-[protein] + ATP = O-phospho-L-threonyl-[protein] + ADP + H(+). Its function is as follows. Protein kinase that seems to play a role in the regulation of cell morphogenesis and proliferation. In Candida glabrata (strain ATCC 2001 / BCRC 20586 / JCM 3761 / NBRC 0622 / NRRL Y-65 / CBS 138) (Yeast), this protein is Serine/threonine-protein kinase CBK1 (CBK1).